A 515-amino-acid polypeptide reads, in one-letter code: 2-isopropylmalate synthase (515 aa).

A Pyruvate carboxyltransferase domain is found at 5–267 (VIIFDTTLRD…DTRINTQEIH (263 aa)). Mn(2+) contacts are provided by aspartate 14, histidine 202, histidine 204, and asparagine 238. Residues 392-515 (VLDKLSAHST…VADIKSHKHH (124 aa)) form a regulatory domain region.

Belongs to the alpha-IPM synthase/homocitrate synthase family. LeuA type 1 subfamily. Homodimer. Mn(2+) serves as cofactor.

The protein localises to the cytoplasm. The enzyme catalyses 3-methyl-2-oxobutanoate + acetyl-CoA + H2O = (2S)-2-isopropylmalate + CoA + H(+). The protein operates within amino-acid biosynthesis; L-leucine biosynthesis; L-leucine from 3-methyl-2-oxobutanoate: step 1/4. Catalyzes the condensation of the acetyl group of acetyl-CoA with 3-methyl-2-oxobutanoate (2-ketoisovalerate) to form 3-carboxy-3-hydroxy-4-methylpentanoate (2-isopropylmalate). This is 2-isopropylmalate synthase from Haemophilus influenzae (strain 86-028NP).